The chain runs to 398 residues: Immunoglobulin heavy constant alpha 1 (398 aa).

At 1–364 the chain is on the extracellular side; it reads ASPTSPKVFP…TPGANLWPTT (364 aa). Residues 6–98 form the Ig-like 1 domain; it reads PKVFPLSLCS…HYTNPSQDVT (93 aa). Cystine bridges form between C26–C85 and C77–C101. The disordered stretch occupies residues 96–122; the sequence is DVTVPCPVPSTPPTPSPSTPPTPSPSC. The segment covering 101–119 has biased composition (pro residues); the sequence is CPVPSTPPTPSPSTPPTPS. An O-linked (GalNAc...) serine glycan is attached at S105. O-linked (GalNAc...) threonine glycans are attached at residues T106 and T109. 2 O-linked (GalNAc...) serine glycosylation sites follow: S111 and S113. 2 O-linked (GalNAc...) threonine glycosylation sites follow: T114 and T117. Residues S119 and S121 are each glycosylated (O-linked (GalNAc...) serine). 3 disulfides stabilise this stretch: C123–C180, C147–C204, and C250–C313. Ig-like domains are found at residues 125–220 and 228–330; these read PRLS…ATLS and PEVH…KTID. N144 carries N-linked (GlcNAc...) (complex) asparagine glycosylation. Residue P340 is glycosylated (N-linked (GlcNAc...) (complex) asparagine). Position 352 (E352) interacts with 3-hydroxy-L-kynurenine. Residues 365-383 traverse the membrane as a helical segment; the sequence is ITFLTLFLLSLFYSTALTV. Topologically, residues 384–398 are cytoplasmic; sequence TSVRGPSGNREGPQY.

Immunoglobulins are composed of two identical heavy chains and two identical light chains; disulfide-linked. Monomeric or polymeric. Part of the secretory IgA (sIgA) complex that consists of two, four or five IgA monomers, and two additional non-Ig polypeptides, namely the JCHAIN and the secretory component (the proteolytic product of PIGR). In terms of processing, 3-Hydroxykynurenine, an oxidized tryptophan metabolite that is common in biological fluids, reacts with alpha-1-microglobulin to form heterogeneous polycyclic chromophores including hydroxanthommatin. The chromophore reacts with accessible cysteines forming non-reducible thioether cross-links with Ig alpha-1 chain C region Cys-352. Post-translationally, N- and O-glycosylated. N-glycan at Asn-144: Hex5HexNAc4.

It localises to the secreted. The protein localises to the cell membrane. Its function is as follows. Constant region of immunoglobulin heavy chains. Immunoglobulins, also known as antibodies, are membrane-bound or secreted glycoproteins produced by B lymphocytes. In the recognition phase of humoral immunity, the membrane-bound immunoglobulins serve as receptors which, upon binding of a specific antigen, trigger the clonal expansion and differentiation of B lymphocytes into immunoglobulins-secreting plasma cells. Secreted immunoglobulins mediate the effector phase of humoral immunity, which results in the elimination of bound antigens. The antigen binding site is formed by the variable domain of one heavy chain, together with that of its associated light chain. Thus, each immunoglobulin has two antigen binding sites with remarkable affinity for a particular antigen. The variable domains are assembled by a process called V-(D)-J rearrangement and can then be subjected to somatic hypermutations which, after exposure to antigen and selection, allow affinity maturation for a particular antigen. Ig alpha is the major immunoglobulin class in body secretions. The sequence is that of Immunoglobulin heavy constant alpha 1 from Homo sapiens (Human).